The primary structure comprises 708 residues: Ribosomal RNA large subunit methyltransferase K/L (708 aa).

The 112-residue stretch at 43–154 folds into the THUMP domain; the sequence is QGYQITLWTR…RGKITIGINF (112 aa).

The protein belongs to the methyltransferase superfamily. RlmKL family.

Its subcellular location is the cytoplasm. It catalyses the reaction guanosine(2445) in 23S rRNA + S-adenosyl-L-methionine = N(2)-methylguanosine(2445) in 23S rRNA + S-adenosyl-L-homocysteine + H(+). It carries out the reaction guanosine(2069) in 23S rRNA + S-adenosyl-L-methionine = N(2)-methylguanosine(2069) in 23S rRNA + S-adenosyl-L-homocysteine + H(+). Functionally, specifically methylates the guanine in position 2445 (m2G2445) and the guanine in position 2069 (m7G2069) of 23S rRNA. The polypeptide is Ribosomal RNA large subunit methyltransferase K/L (Shewanella amazonensis (strain ATCC BAA-1098 / SB2B)).